Reading from the N-terminus, the 872-residue chain is Alanine--tRNA ligase (872 aa).

Zn(2+) contacts are provided by H567, H571, C669, and H673.

This sequence belongs to the class-II aminoacyl-tRNA synthetase family. Zn(2+) is required as a cofactor.

It is found in the cytoplasm. It carries out the reaction tRNA(Ala) + L-alanine + ATP = L-alanyl-tRNA(Ala) + AMP + diphosphate. In terms of biological role, catalyzes the attachment of alanine to tRNA(Ala) in a two-step reaction: alanine is first activated by ATP to form Ala-AMP and then transferred to the acceptor end of tRNA(Ala). Also edits incorrectly charged Ser-tRNA(Ala) and Gly-tRNA(Ala) via its editing domain. The polypeptide is Alanine--tRNA ligase (Streptococcus gordonii (strain Challis / ATCC 35105 / BCRC 15272 / CH1 / DL1 / V288)).